Reading from the N-terminus, the 969-residue chain is Protein translocase subunit SecA (969 aa).

Residues Gln99, 117-121 (GEGKT), and Asp631 contribute to the ATP site.

Belongs to the SecA family. In terms of assembly, monomer and homodimer. Part of the essential Sec protein translocation apparatus which comprises SecA, SecYEG and auxiliary proteins SecDF. Other proteins may also be involved.

The protein localises to the cell inner membrane. It is found in the cytoplasm. It catalyses the reaction ATP + H2O + cellular proteinSide 1 = ADP + phosphate + cellular proteinSide 2.. In terms of biological role, part of the Sec protein translocase complex. Interacts with the SecYEG preprotein conducting channel. Has a central role in coupling the hydrolysis of ATP to the transfer of proteins into and across the cell membrane, serving as an ATP-driven molecular motor driving the stepwise translocation of polypeptide chains across the membrane. This Chlamydia trachomatis serovar D (strain ATCC VR-885 / DSM 19411 / UW-3/Cx) protein is Protein translocase subunit SecA.